The primary structure comprises 501 residues: Phenylalanine--tRNA ligase alpha subunit (501 aa).

The L-phenylalanine site is built by Thr340 and Phe423. Glu425 is a binding site for Mg(2+). Phe448 is a binding site for L-phenylalanine.

This sequence belongs to the class-II aminoacyl-tRNA synthetase family. Phe-tRNA synthetase alpha subunit type 2 subfamily. As to quaternary structure, tetramer of two alpha and two beta subunits. Requires Mg(2+) as cofactor.

It localises to the cytoplasm. It catalyses the reaction tRNA(Phe) + L-phenylalanine + ATP = L-phenylalanyl-tRNA(Phe) + AMP + diphosphate + H(+). This chain is Phenylalanine--tRNA ligase alpha subunit, found in Methanococcus maripaludis (strain C7 / ATCC BAA-1331).